A 645-amino-acid polypeptide reads, in one-letter code: UPF0313 protein CLK_3381 (645 aa).

Positions 295 to 566 (AIKEVKFSIT…RMQRALLQFS (272 aa)) constitute a Radical SAM core domain. The [4Fe-4S] cluster site is built by Cys309, Cys313, and Cys316. Residues 598 to 645 (NKPYKKSHKKNNVKNNNNHYNKNNNYNKNKDVSKKNKKNSLSKHKKRK) form a disordered region. Residues 600–609 (PYKKSHKKNN) show a composition bias toward basic residues. Over residues 610–624 (VKNNNNHYNKNNNYN) the composition is skewed to low complexity. Basic residues predominate over residues 632–645 (KNKKNSLSKHKKRK).

It belongs to the UPF0313 family. The cofactor is [4Fe-4S] cluster.

The chain is UPF0313 protein CLK_3381 from Clostridium botulinum (strain Loch Maree / Type A3).